Consider the following 268-residue polypeptide: MTHTTTIAAKRGGLALAKKAAAAGAVALAVASLQPVSAAHAADARVIGGKPAAQNEFPFMVHLSMGCGGALYKKDIVLTAAHCMDGSGNNTRITVTAGVADLNSSGAIKVKSTKVKVAPGYDGVGKDWALIKLAKPIDRPTLKIATTAKYNRGTFTIAGWGDVREGAGTGTTKLQKANVPFVSDRACKWHYGNRLVPKQELCAGYASGGIDTCQGDSGGPMFRKDDAGKWIQVGIVSWGDGCARSGVPGVYTEVSTFAKDIAKAASAL.

A signal peptide spans 1–41; that stretch reads MTHTTTIAAKRGGLALAKKAAAAGAVALAVASLQPVSAAHA. The propeptide at 42-45 is activation peptide; that stretch reads ADAR. One can recognise a Peptidase S1 domain in the interval 46-266; it reads VIGGKPAAQN…FAKDIAKAAS (221 aa). A disulfide bond links cysteine 67 and cysteine 83. Catalysis depends on charge relay system residues histidine 82 and aspartate 127. 2 disulfide bridges follow: cysteine 187-cysteine 202 and cysteine 213-cysteine 242. Serine 217 acts as the Charge relay system in catalysis.

The protein belongs to the peptidase S1 family.

Protease that shows preferential cleavage after Arg and Lys residues. In Streptomyces glaucescens, this protein is Trypsin-like protease.